We begin with the raw amino-acid sequence, 204 residues long: Large ribosomal subunit protein uL4 (204 aa).

Positions 49–90 (KVKGMGEVSGTTKKPYRQKGTGSARQGSLRAPQYRTGGAVHG) are disordered.

The protein belongs to the universal ribosomal protein uL4 family. As to quaternary structure, part of the 50S ribosomal subunit.

Functionally, one of the primary rRNA binding proteins, this protein initially binds near the 5'-end of the 23S rRNA. It is important during the early stages of 50S assembly. It makes multiple contacts with different domains of the 23S rRNA in the assembled 50S subunit and ribosome. Forms part of the polypeptide exit tunnel. The sequence is that of Large ribosomal subunit protein uL4 from Gluconacetobacter diazotrophicus (strain ATCC 49037 / DSM 5601 / CCUG 37298 / CIP 103539 / LMG 7603 / PAl5).